Consider the following 342-residue polypeptide: Phosphate acyltransferase (342 aa).

The protein belongs to the PlsX family. In terms of assembly, homodimer. Probably interacts with PlsY.

Its subcellular location is the cytoplasm. The catalysed reaction is a fatty acyl-[ACP] + phosphate = an acyl phosphate + holo-[ACP]. Its pathway is lipid metabolism; phospholipid metabolism. Its function is as follows. Catalyzes the reversible formation of acyl-phosphate (acyl-PO(4)) from acyl-[acyl-carrier-protein] (acyl-ACP). This enzyme utilizes acyl-ACP as fatty acyl donor, but not acyl-CoA. This is Phosphate acyltransferase from Shewanella sp. (strain ANA-3).